The primary structure comprises 728 residues: Ribosome biogenesis protein bop1-A (728 aa).

A disordered region spans residues 1–114; sequence MKRGSQGEAG…ENDSSDEEDI (114 aa). The span at 55 to 67 shows a compositional bias: acidic residues; the sequence is SDDEEDHWSEEEE. The segment covering 68–77 has biased composition (basic and acidic residues); it reads NPGKSPKEII. WD repeat units lie at residues 393–432, 434–474, 514–556, 559–597, 600–639, 643–682, and 698–728; these read GHKD…CMKS, VLEG…RLLC, KHQK…SQNP, KNKG…LTKK, TNCK…KPYK, HHKK…DLLQ, and HRDL…RLFT.

Belongs to the WD repeat BOP1/ERB1 family. Component of the PeBoW complex, composed of bop1, pes1 and wdr12. The complex is held together by bop1, which interacts with pes1 via its N-terminal domain and with wdr12 via a high-affinity interaction between the seven-bladed beta-propeller domains of the 2 proteins. The PeBoW complex associates with the 66S pre-ribosome.

Its subcellular location is the nucleus. It is found in the nucleolus. The protein resides in the nucleoplasm. Functionally, component of the PeBoW complex, which is required for maturation of 28S and 5.8S ribosomal RNAs and formation of the 60S ribosome. The polypeptide is Ribosome biogenesis protein bop1-A (bop1-a) (Xenopus laevis (African clawed frog)).